The following is an 813-amino-acid chain: Ribonuclease R (813 aa).

Residues 260 to 587 enclose the RNB domain; it reads RVDLRDLPLV…LHRAIKYLLA (328 aa). An N6-acetyllysine; by PatZ modification is found at Lys544. Positions 644–725 constitute an S1 motif domain; it reads GNVFKGVISS…DERKIDFSLI (82 aa). Residues 731–813 form a disordered region; that stretch reads PRNVGKTARE…KRAAKKKVAE (83 aa). 2 stretches are compositionally biased toward basic and acidic residues: residues 737–749 and 761–774; these read TARE…DAGK and VNFE…GEKK. The span at 775–791 shows a compositional bias: basic residues; the sequence is TKPKAAKKDARKAKKPS. Low complexity predominate over residues 792–801; that stretch reads AKTQKIAAAT. Residues 802-813 are compositionally biased toward basic residues; it reads KAKRAAKKKVAE.

This sequence belongs to the RNR ribonuclease family. RNase R subfamily. In terms of assembly, monomer. Mg(2+) serves as cofactor. Acetylated at Lys-544 by PatZ during exponential growth phase. Acetylation alters RNase R structure and enhances binding of SsrA/tmRNA and SmpB, leading to instability and degradation of RNase R. Not acetylated and stable in stationary phase cells.

The protein localises to the cytoplasm. The enzyme catalyses Exonucleolytic cleavage in the 3'- to 5'-direction to yield nucleoside 5'-phosphates.. With respect to regulation, stimulated by the presence of a monovalent cation. Highly unstable in exponential growth phase. This instability is due to the binding of SsrA/tmRNA and its associated protein SmpB to the C-terminal region of RNase R. In contrast, RNase R becomes stabilized upon entry into stationary phase. The difference in stability between exponential and stationary phase is due to the acetylation of a single lysine residue. Functionally, 3'-5' exoribonuclease that releases 5'-nucleoside monophosphates and is involved in maturation of structured RNAs (rRNAs, tRNAs and SsrA/tmRNA). In stationary phase, involved in the post-transcriptional regulation of ompA mRNA stability. Shortens RNA processively to di- and trinucleotides. In vitro, exhibits helicase activity, which is independent of its RNase activity. RNases 2 and R (rnb and this entry) contribute to rRNA degradation during starvation, while RNase R and PNPase (this entry and pnp) are the major contributors to quality control of rRNA during steady state growth. Required for the expression of virulence genes in enteroinvasive strains of E.coli. This is Ribonuclease R (rnr) from Escherichia coli (strain K12).